Reading from the N-terminus, the 55-residue chain is Large ribosomal subunit protein bL33m (55 aa).

Belongs to the bacterial ribosomal protein bL33 family. Component of the mitochondrial large ribosomal subunit (mt-LSU). Mature yeast 74S mitochondrial ribosomes consist of a small (37S) and a large (54S) subunit. The 37S small subunit contains a 15S ribosomal RNA (15S mt-rRNA) and at least 32 different proteins. The 54S large subunit contains a 21S rRNA (21S mt-rRNA) and at least 45 different proteins. bL33m stabilizes the tRNA acceptor stem in the E-site.

The protein resides in the mitochondrion. Functionally, component of the mitochondrial ribosome (mitoribosome), a dedicated translation machinery responsible for the synthesis of mitochondrial genome-encoded proteins, including at least some of the essential transmembrane subunits of the mitochondrial respiratory chain. The mitoribosomes are attached to the mitochondrial inner membrane and translation products are cotranslationally integrated into the membrane. This Schizosaccharomyces pombe (strain 972 / ATCC 24843) (Fission yeast) protein is Large ribosomal subunit protein bL33m (mrpl39).